Reading from the N-terminus, the 202-residue chain is Pyridoxal 5'-phosphate synthase subunit PdxT (202 aa).

Position 52-54 (52-54 (GES)) interacts with L-glutamine. Cys-84 (nucleophile) is an active-site residue. L-glutamine is bound by residues Arg-116 and 143–144 (IR). Residues His-184 and Glu-186 each act as charge relay system in the active site.

The protein belongs to the glutaminase PdxT/SNO family. In the presence of PdxS, forms a dodecamer of heterodimers. Only shows activity in the heterodimer.

It catalyses the reaction aldehydo-D-ribose 5-phosphate + D-glyceraldehyde 3-phosphate + L-glutamine = pyridoxal 5'-phosphate + L-glutamate + phosphate + 3 H2O + H(+). The enzyme catalyses L-glutamine + H2O = L-glutamate + NH4(+). It functions in the pathway cofactor biosynthesis; pyridoxal 5'-phosphate biosynthesis. In terms of biological role, catalyzes the hydrolysis of glutamine to glutamate and ammonia as part of the biosynthesis of pyridoxal 5'-phosphate. The resulting ammonia molecule is channeled to the active site of PdxS. In Pyrobaculum neutrophilum (strain DSM 2338 / JCM 9278 / NBRC 100436 / V24Sta) (Thermoproteus neutrophilus), this protein is Pyridoxal 5'-phosphate synthase subunit PdxT.